The chain runs to 529 residues: Apolipoprotein N-acyltransferase (529 aa).

Transmembrane regions (helical) follow at residues 8-28 (VMLA…AVGA), 66-86 (ILPA…AGLW), 105-125 (LAIL…VAAA), 178-198 (LLGL…PALI), and 203-223 (GMGP…GYGF). The region spanning 242-491 (VQPAIDQSRK…VGILDATLSG (250 aa)) is the CN hydrolase domain. Glu-286 (proton acceptor) is an active-site residue. Lys-350 is an active-site residue. Cys-403 functions as the Nucleophile in the catalytic mechanism. The chain crosses the membrane as a helical span at residues 505-525 (YFWLIFSILMIVAVFPALSFA).

The protein belongs to the CN hydrolase family. Apolipoprotein N-acyltransferase subfamily.

Its subcellular location is the cell inner membrane. The catalysed reaction is N-terminal S-1,2-diacyl-sn-glyceryl-L-cysteinyl-[lipoprotein] + a glycerophospholipid = N-acyl-S-1,2-diacyl-sn-glyceryl-L-cysteinyl-[lipoprotein] + a 2-acyl-sn-glycero-3-phospholipid + H(+). Its pathway is protein modification; lipoprotein biosynthesis (N-acyl transfer). In terms of biological role, catalyzes the phospholipid dependent N-acylation of the N-terminal cysteine of apolipoprotein, the last step in lipoprotein maturation. The chain is Apolipoprotein N-acyltransferase from Agrobacterium fabrum (strain C58 / ATCC 33970) (Agrobacterium tumefaciens (strain C58)).